Reading from the N-terminus, the 239-residue chain is 7-cyano-7-deazaguanine synthase (239 aa).

Residue 13-23 (FSGGQDSTTCL) coordinates ATP. Cysteine 192, cysteine 201, cysteine 204, and cysteine 207 together coordinate Zn(2+).

It belongs to the QueC family. It depends on Zn(2+) as a cofactor.

The enzyme catalyses 7-carboxy-7-deazaguanine + NH4(+) + ATP = 7-cyano-7-deazaguanine + ADP + phosphate + H2O + H(+). It participates in purine metabolism; 7-cyano-7-deazaguanine biosynthesis. Functionally, catalyzes the ATP-dependent conversion of 7-carboxy-7-deazaguanine (CDG) to 7-cyano-7-deazaguanine (preQ(0)). This chain is 7-cyano-7-deazaguanine synthase, found in Shewanella sp. (strain MR-4).